Consider the following 100-residue polypeptide: uncharacterized protein (100 aa).

Helical transmembrane passes span 17–37 (IIILTLLFILIMLIFRNSVSF) and 78–98 (MVDKTRLFIFLFFSFIITIPF).

It is found in the endoplasmic reticulum membrane. This is an uncharacterized protein from Saccharomyces cerevisiae (strain ATCC 204508 / S288c) (Baker's yeast).